A 156-amino-acid polypeptide reads, in one-letter code: Small ribosomal subunit protein uS7 (156 aa).

This sequence belongs to the universal ribosomal protein uS7 family. Part of the 30S ribosomal subunit. Contacts proteins S9 and S11.

Functionally, one of the primary rRNA binding proteins, it binds directly to 16S rRNA where it nucleates assembly of the head domain of the 30S subunit. Is located at the subunit interface close to the decoding center, probably blocks exit of the E-site tRNA. In Saccharophagus degradans (strain 2-40 / ATCC 43961 / DSM 17024), this protein is Small ribosomal subunit protein uS7.